The primary structure comprises 131 residues: uncharacterized protein (131 aa).

This is an uncharacterized protein from Homo sapiens (Human).